Reading from the N-terminus, the 117-residue chain is uncharacterized protein (117 aa).

The interval 96–117 (RKGGASKHRTLSAETGIRGEGE) is disordered.

This is an uncharacterized protein from Saccharomyces cerevisiae (strain ATCC 204508 / S288c) (Baker's yeast).